The following is a 387-amino-acid chain: F420-dependent formate dehydrogenase 1 subunit beta (387 aa).

2 4Fe-4S ferredoxin-type domains span residues 275 to 298 and 326 to 355; these read TIEE…VCPV and VRMS…ARIF. Residues Cys-286, Cys-289, Cys-292, Cys-296, Cys-335, Cys-338, Cys-341, and Cys-345 each coordinate [4Fe-4S] cluster. Positions 366–387 are disordered; that stretch reads LGYRPGVDDEAPPALGGSCPTQ.

This sequence belongs to the FrhB family. In terms of assembly, dimer of an alpha (FdhA1) and a beta (FdhB1) subunit. It depends on [4Fe-4S] cluster as a cofactor. The cofactor is FAD. Requires Zn(2+) as cofactor.

It carries out the reaction oxidized coenzyme F420-(gamma-L-Glu)(n) + formate + 2 H(+) = reduced coenzyme F420-(gamma-L-Glu)(n) + CO2. Its function is as follows. Catalyzes the oxidation of formate to carbon dioxide, with coenzyme F420 as the electron acceptor. In vitro can also use methyl viologen as electron acceptor. This Methanococcus maripaludis (strain DSM 14266 / JCM 13030 / NBRC 101832 / S2 / LL) protein is F420-dependent formate dehydrogenase 1 subunit beta.